Reading from the N-terminus, the 576-residue chain is Zn(2)-C6 fungal-type transcription factor mpsE (576 aa).

A DNA-binding region (zn(2)-C6 fungal-type) is located at residues 15 to 46 (CDRCRSHKLKCPQQPSTATGACQRCTRAKAQC). A compositionally biased stretch (polar residues) spans 47 to 61 (TFSPRSRAIKNTQDG). Disordered stretches follow at residues 47–123 (TFSP…GTFD), 334–369 (VAHA…SSTA), and 404–424 (HPAP…LHRR). Low complexity predominate over residues 95–109 (PPQQQQSDQQKPSGS).

The protein resides in the nucleus. Transcription factor; part of the gene cluster that mediates the biosynthesis of macrophasetins, 3-decalinoyltetramic acids (DTAs) which feature a tetramate (pyrrolidine-2,4-dione) unit connected to a decalin fragment and that have potent bioactivities. This chain is Zn(2)-C6 fungal-type transcription factor mpsE, found in Macrophomina phaseolina (strain MS6) (Charcoal rot fungus).